Reading from the N-terminus, the 427-residue chain is D-inositol 3-phosphate glycosyltransferase (427 aa).

Histidine 12 is a binding site for 1D-myo-inositol 3-phosphate. UDP-N-acetyl-alpha-D-glucosamine contacts are provided by residues 18–19 (QP) and glycine 26. Residues 23–28 (DAGGMN), lysine 81, tyrosine 113, threonine 137, and arginine 157 each bind 1D-myo-inositol 3-phosphate. Residues arginine 234, lysine 239, and arginine 297 each contribute to the UDP-N-acetyl-alpha-D-glucosamine site. Mg(2+)-binding residues include tyrosine 306, glutamine 307, and alanine 309. UDP-N-acetyl-alpha-D-glucosamine contacts are provided by glutamate 319 and glutamate 327. Threonine 333 provides a ligand contact to Mg(2+).

The protein belongs to the glycosyltransferase group 1 family. MshA subfamily. Homodimer.

It catalyses the reaction 1D-myo-inositol 3-phosphate + UDP-N-acetyl-alpha-D-glucosamine = 1D-myo-inositol 2-acetamido-2-deoxy-alpha-D-glucopyranoside 3-phosphate + UDP + H(+). Catalyzes the transfer of a N-acetyl-glucosamine moiety to 1D-myo-inositol 3-phosphate to produce 1D-myo-inositol 2-acetamido-2-deoxy-glucopyranoside 3-phosphate in the mycothiol biosynthesis pathway. This chain is D-inositol 3-phosphate glycosyltransferase, found in Corynebacterium diphtheriae (strain ATCC 700971 / NCTC 13129 / Biotype gravis).